The sequence spans 365 residues: Transmembrane protein 25 (365 aa).

A signal peptide spans 1–26 (MELPLSQATLRHTLLLLPALLSSGQG). At 27–232 (ELAPQIDGQT…APGLLATRIE (206 aa)) the chain is on the extracellular side. An Ig-like domain is found at 30 to 123 (PQIDGQTWAE…SGRPANASVI (94 aa)). A disulfide bridge links cysteine 52 with cysteine 107. N-linked (GlcNAc...) asparagine glycosylation is found at asparagine 106, asparagine 162, asparagine 192, and asparagine 205. The chain crosses the membrane as a helical span at residues 233–253 (VPLLGIVVAGGLALGTLVGFS). At 254 to 365 (TLVACLVCRK…SSVSSDEIWL (112 aa)) the chain is on the cytoplasmic side.

In terms of assembly, interacts with GRIN2B. Expressed throughout the brain with higher levels within the hippocampus.

Its subcellular location is the late endosome. The protein resides in the lysosome. It localises to the cell membrane. The protein localises to the secreted. Its function is as follows. In neurons, modulates the degradation of NMDA receptor GRIN2B subunit. Plays a role in the regulation of neuronal excitability. The protein is Transmembrane protein 25 of Mus musculus (Mouse).